We begin with the raw amino-acid sequence, 309 residues long: Large ribosomal subunit protein mL45 (309 aa).

The protein belongs to the mitochondrion-specific ribosomal protein mL45 family. As to quaternary structure, component of the mitochondrial ribosome large subunit (39S) which comprises a 16S rRNA and about 50 distinct proteins.

The protein localises to the mitochondrion. Functionally, component of the mitochondrial large ribosomal subunit (mt-LSU). Within the mitochondrial ribosomes, required to direct the nascent polypeptide toward the tunnel exit and position the exit at a distance from the membrane surface. This Xenopus tropicalis (Western clawed frog) protein is Large ribosomal subunit protein mL45 (mrpl45).